A 483-amino-acid chain; its full sequence is Phosphoglucosamine mutase (483 aa).

The active-site Phosphoserine intermediate is Ser-131. Residues Ser-131, Asp-272, Asp-274, and Asp-276 each contribute to the Mg(2+) site. Ser-131 is modified (phosphoserine).

This sequence belongs to the phosphohexose mutase family. It depends on Mg(2+) as a cofactor. In terms of processing, activated by phosphorylation.

It carries out the reaction alpha-D-glucosamine 1-phosphate = D-glucosamine 6-phosphate. Functionally, catalyzes the conversion of glucosamine-6-phosphate to glucosamine-1-phosphate. The sequence is that of Phosphoglucosamine mutase from Magnetococcus marinus (strain ATCC BAA-1437 / JCM 17883 / MC-1).